A 216-amino-acid polypeptide reads, in one-letter code: Thiopurine S-methyltransferase (216 aa).

The S-adenosyl-L-methionine site is built by W10, L45, E66, and R123.

Belongs to the class I-like SAM-binding methyltransferase superfamily. TPMT family.

The protein resides in the cytoplasm. The enzyme catalyses S-adenosyl-L-methionine + a thiopurine = S-adenosyl-L-homocysteine + a thiopurine S-methylether.. The polypeptide is Thiopurine S-methyltransferase (Pseudomonas putida (strain ATCC 47054 / DSM 6125 / CFBP 8728 / NCIMB 11950 / KT2440)).